A 322-amino-acid chain; its full sequence is Nodulation protein Z (322 aa).

The GT23 domain maps to 1–314 (MYNRYVLSRR…NDPSRLVVIE (314 aa)).

It belongs to the glycosyltransferase 23 family.

Functionally, fucosyltransferase which adds the fucose moiety of the nod factor on its terminal reducing N-acetylglucosamine end. Uses GDP-fucose as the donor group. This chain is Nodulation protein Z (nodZ), found in Sinorhizobium fredii (strain NBRC 101917 / NGR234).